A 142-amino-acid chain; its full sequence is Large ribosomal subunit protein uL16 (142 aa).

It belongs to the universal ribosomal protein uL16 family. Part of the 50S ribosomal subunit.

Functionally, binds 23S rRNA and is also seen to make contacts with the A and possibly P site tRNAs. This chain is Large ribosomal subunit protein uL16, found in Thermotoga maritima (strain ATCC 43589 / DSM 3109 / JCM 10099 / NBRC 100826 / MSB8).